A 410-amino-acid chain; its full sequence is Multifunctional CCA protein (410 aa).

ATP contacts are provided by Gly-8 and Arg-11. 2 residues coordinate CTP: Gly-8 and Arg-11. 2 residues coordinate Mg(2+): Asp-21 and Asp-23. ATP-binding residues include Arg-91, Arg-138, and Arg-141. Residues Arg-91, Arg-138, and Arg-141 each contribute to the CTP site. The HD domain occupies 229–347 (TGVHQEMVSD…AQLALVCEAD (119 aa)).

It belongs to the tRNA nucleotidyltransferase/poly(A) polymerase family. Bacterial CCA-adding enzyme type 1 subfamily. In terms of assembly, monomer. Can also form homodimers and oligomers. Mg(2+) is required as a cofactor. Ni(2+) serves as cofactor.

It carries out the reaction a tRNA precursor + 2 CTP + ATP = a tRNA with a 3' CCA end + 3 diphosphate. The catalysed reaction is a tRNA with a 3' CCA end + 2 CTP + ATP = a tRNA with a 3' CCACCA end + 3 diphosphate. Catalyzes the addition and repair of the essential 3'-terminal CCA sequence in tRNAs without using a nucleic acid template. Adds these three nucleotides in the order of C, C, and A to the tRNA nucleotide-73, using CTP and ATP as substrates and producing inorganic pyrophosphate. tRNA 3'-terminal CCA addition is required both for tRNA processing and repair. Also involved in tRNA surveillance by mediating tandem CCA addition to generate a CCACCA at the 3' terminus of unstable tRNAs. While stable tRNAs receive only 3'-terminal CCA, unstable tRNAs are marked with CCACCA and rapidly degraded. The chain is Multifunctional CCA protein from Xanthomonas campestris pv. campestris (strain B100).